Here is a 618-residue protein sequence, read N- to C-terminus: Dihydroxy-acid dehydratase (618 aa).

Mg(2+) is bound at residue D81. C122 contributes to the [2Fe-2S] cluster binding site. Mg(2+) is bound by residues D123 and K124. Residue K124 is modified to N6-carboxylysine. C199 contributes to the [2Fe-2S] cluster binding site. Mg(2+) is bound at residue E495. The active-site Proton acceptor is S521.

The protein belongs to the IlvD/Edd family. Homodimer. [2Fe-2S] cluster is required as a cofactor. Requires Mg(2+) as cofactor.

The enzyme catalyses (2R)-2,3-dihydroxy-3-methylbutanoate = 3-methyl-2-oxobutanoate + H2O. It carries out the reaction (2R,3R)-2,3-dihydroxy-3-methylpentanoate = (S)-3-methyl-2-oxopentanoate + H2O. Its pathway is amino-acid biosynthesis; L-isoleucine biosynthesis; L-isoleucine from 2-oxobutanoate: step 3/4. The protein operates within amino-acid biosynthesis; L-valine biosynthesis; L-valine from pyruvate: step 3/4. Its function is as follows. Functions in the biosynthesis of branched-chain amino acids. Catalyzes the dehydration of (2R,3R)-2,3-dihydroxy-3-methylpentanoate (2,3-dihydroxy-3-methylvalerate) into 2-oxo-3-methylpentanoate (2-oxo-3-methylvalerate) and of (2R)-2,3-dihydroxy-3-methylbutanoate (2,3-dihydroxyisovalerate) into 2-oxo-3-methylbutanoate (2-oxoisovalerate), the penultimate precursor to L-isoleucine and L-valine, respectively. The protein is Dihydroxy-acid dehydratase of Blochmanniella floridana.